The primary structure comprises 641 residues: Raffinose carrier protein (641 aa).

The segment at 1 to 506 is permease; the sequence is MQEEHNYKWV…GQVIPLAQVN (506 aa). 12 helical membrane passes run 25-45, 57-77, 93-113, 120-140, 168-188, 201-221, 253-273, 288-308, 317-337, 342-362, 394-414, and 429-449; these read AFYSILSGYLIIFITSHLFDT, LVTLIIMVLRIVELFIDPFIG, WVVVGGTVSSIILLLLFTNLG, AMIYLVVFAILYITMDIFYSF, LGSTIGGGLVGVLVMPAVIFF, WFIFALIICLIALISAWGVGL, LLWAALAYLFYGVGINILGSL, FSILSIINIFLGLIATSLFPV, GVFAGCLVFMLGGIAIFTIAG, LVLLAATMFGFPQQMVFLVVL, FGGAISNGVVGQIAIISGMTT, and FKLTMFAFPALMLLIAIGIFS. One can recognise a PTS EIIA type-1 domain in the interval 507–611; that stretch reads DPTFAAGTLG…DDTVIMTVTN (105 aa). Residue histidine 559 is modified to Phosphohistidine; by HPr.

It in the N-terminal section; belongs to the sodium:galactoside symporter (TC 2.A.2) family.

The protein resides in the cell membrane. In Pediococcus pentosaceus, this protein is Raffinose carrier protein (rafP).